The sequence spans 404 residues: Cysteine desulfurase IscS (404 aa).

Residues 75–76, Asn155, Gln183, and 203–205 each bind pyridoxal 5'-phosphate; these read AT and SGH. Lys206 bears the N6-(pyridoxal phosphate)lysine mark. Thr243 is a binding site for pyridoxal 5'-phosphate. Residue Cys328 is the Cysteine persulfide intermediate of the active site. Residue Cys328 coordinates [2Fe-2S] cluster.

The protein belongs to the class-V pyridoxal-phosphate-dependent aminotransferase family. NifS/IscS subfamily. As to quaternary structure, homodimer. Forms a heterotetramer with IscU, interacts with other sulfur acceptors. It depends on pyridoxal 5'-phosphate as a cofactor.

The protein localises to the cytoplasm. It catalyses the reaction (sulfur carrier)-H + L-cysteine = (sulfur carrier)-SH + L-alanine. Its pathway is cofactor biosynthesis; iron-sulfur cluster biosynthesis. Master enzyme that delivers sulfur to a number of partners involved in Fe-S cluster assembly, tRNA modification or cofactor biosynthesis. Catalyzes the removal of elemental sulfur atoms from cysteine to produce alanine. Functions as a sulfur delivery protein for Fe-S cluster synthesis onto IscU, an Fe-S scaffold assembly protein, as well as other S acceptor proteins. The polypeptide is Cysteine desulfurase IscS (Actinobacillus succinogenes (strain ATCC 55618 / DSM 22257 / CCUG 43843 / 130Z)).